The chain runs to 378 residues: Lipoyl synthase, mitochondrial (378 aa).

[4Fe-4S] cluster-binding residues include Cys109, Cys114, Cys120, Cys140, Cys144, Cys147, and Ser356. Residues 125-345 form the Radical SAM core domain; it reads ETGTATATIM…QTLGMEMGFR (221 aa).

Belongs to the radical SAM superfamily. Lipoyl synthase family. Requires [4Fe-4S] cluster as cofactor.

The protein localises to the mitochondrion. The enzyme catalyses [[Fe-S] cluster scaffold protein carrying a second [4Fe-4S](2+) cluster] + N(6)-octanoyl-L-lysyl-[protein] + 2 oxidized [2Fe-2S]-[ferredoxin] + 2 S-adenosyl-L-methionine + 4 H(+) = [[Fe-S] cluster scaffold protein] + N(6)-[(R)-dihydrolipoyl]-L-lysyl-[protein] + 4 Fe(3+) + 2 hydrogen sulfide + 2 5'-deoxyadenosine + 2 L-methionine + 2 reduced [2Fe-2S]-[ferredoxin]. The protein operates within protein modification; protein lipoylation via endogenous pathway; protein N(6)-(lipoyl)lysine from octanoyl-[acyl-carrier-protein]: step 2/2. In terms of biological role, catalyzes the radical-mediated insertion of two sulfur atoms into the C-6 and C-8 positions of the octanoyl moiety bound to the lipoyl domains of lipoate-dependent enzymes, thereby converting the octanoylated domains into lipoylated derivatives. The chain is Lipoyl synthase, mitochondrial from Medicago truncatula (Barrel medic).